Consider the following 695-residue polypeptide: Probable Rho-GTPase-activating protein 7 (695 aa).

Residues 1 to 11 (MLSAPSSSTTP) are compositionally biased toward low complexity. Residues 1–26 (MLSAPSSSTTPASPPTSPPNTTSSDD) form a disordered region. The 275-residue stretch at 33 to 307 (PKVEAILNSE…ALDNINANTD (275 aa)) folds into the F-BAR domain. The segment at 320 to 499 (EDNKNPTDAS…SVSPQPSSPT (180 aa)) is disordered. Composition is skewed to polar residues over residues 336–348 (PPSSYGTGSSAGK) and 366–382 (PLQNTNPAPSTFPNPSV). Composition is skewed to low complexity over residues 383–432 (ASPA…RTSS), 458–467 (PIQTTTIQTS), and 488–499 (PTSVSPQPSSPT). Phosphoserine occurs at positions 496 and 497. One can recognise a Rho-GAP domain in the interval 506 to 692 (ARLDAIILRE…ILIDYCFTIF (187 aa)).

The chain is Probable Rho-GTPase-activating protein 7 (rga7) from Schizosaccharomyces pombe (strain 972 / ATCC 24843) (Fission yeast).